The sequence spans 466 residues: Histone acetyltransferase type B catalytic subunit DDB_G0275159 (466 aa).

Positions 169-366 constitute an N-acetyltransferase domain; the sequence is AVFRYHEKLQ…FRIAIKKRLY (198 aa). Residues 240-242 and 247-253 each bind acetyl-CoA; these read YLI and QRMGHGK. Residue Glu-279 is the Proton donor/acceptor of the active site. Positions 372-459 form a coiled coil; that stretch reads DSEQIEKMKQ…LEENYHKTLS (88 aa).

The protein belongs to the HAT1 family.

It carries out the reaction L-lysyl-[protein] + acetyl-CoA = N(6)-acetyl-L-lysyl-[protein] + CoA + H(+). The chain is Histone acetyltransferase type B catalytic subunit DDB_G0275159 from Dictyostelium discoideum (Social amoeba).